A 328-amino-acid polypeptide reads, in one-letter code: dTDP-4-dehydrorhamnose 3,5-epimerase (328 aa).

Residues arginine 23, glutamate 28, 46–48 (QEN), and arginine 58 contribute to the substrate site. The active-site Proton acceptor is histidine 61. Substrate contacts are provided by lysine 70 and histidine 117. Tyrosine 130 functions as the Proton donor in the catalytic mechanism. Glutamate 141 and lysine 166 together coordinate substrate.

The protein belongs to the dTDP-4-dehydrorhamnose 3,5-epimerase family. Homodimer.

The catalysed reaction is dTDP-4-dehydro-6-deoxy-alpha-D-glucose = dTDP-4-dehydro-beta-L-rhamnose. It participates in carbohydrate biosynthesis; dTDP-L-rhamnose biosynthesis. The protein operates within bacterial outer membrane biogenesis; LPS O-antigen biosynthesis. In terms of biological role, catalyzes the epimerization of the C3' and C5'positions of dTDP-6-deoxy-D-xylo-4-hexulose, forming dTDP-6-deoxy-L-lyxo-4-hexulose. The chain is dTDP-4-dehydrorhamnose 3,5-epimerase (rfbC) from Neisseria gonorrhoeae.